The primary structure comprises 21 residues: Fibrinogen beta chain (21 aa).

Gln-1 is subject to Pyrrolidone carboxylic acid. Acidic residues predominate over residues 1-11; the sequence is QHSTDYDEVED. A disordered region spans residues 1-21; that stretch reads QHSTDYDEVEDDRAKLHLDAR. O-linked (GalNAc...) threonine glycosylation is present at Thr-4. Residue Tyr-6 is modified to Sulfotyrosine. Residues 12-21 show a composition bias toward basic and acidic residues; sequence DRAKLHLDAR.

As to quaternary structure, heterohexamer; disulfide linked. Contains 2 sets of 3 non-identical chains (alpha, beta and gamma). The 2 heterotrimers are in head to head conformation with the N-termini in a small central domain. In terms of processing, conversion of fibrinogen to fibrin is triggered by thrombin, which cleaves fibrinopeptides A and B from alpha and beta chains, and thus exposes the N-terminal polymerization sites responsible for the formation of the soft clot.

The protein resides in the secreted. Its function is as follows. Cleaved by the protease thrombin to yield monomers which, together with fibrinogen alpha (FGA) and fibrinogen gamma (FGG), polymerize to form an insoluble fibrin matrix. Fibrin has a major function in hemostasis as one of the primary components of blood clots. In addition, functions during the early stages of wound repair to stabilize the lesion and guide cell migration during re-epithelialization. Was originally thought to be essential for platelet aggregation, based on in vitro studies using anticoagulated blood. However subsequent studies have shown that it is not absolutely required for thrombus formation in vivo. Enhances expression of SELP in activated platelets. Maternal fibrinogen is essential for successful pregnancy. Fibrin deposition is also associated with infection, where it protects against IFNG-mediated hemorrhage. May also facilitate the antibacterial immune response via both innate and T-cell mediated pathways. The chain is Fibrinogen beta chain (FGB) from Muntiacus muntjak (Barking deer).